A 488-amino-acid polypeptide reads, in one-letter code: Cysteine--tRNA ligase (488 aa).

Residue C29 coordinates Zn(2+). The 'HIGH' region motif lies at 31–41 (ATVQGMPHVGH). Zn(2+) contacts are provided by C227, H252, and E256. The 'KMSKS' region motif lies at 283–287 (KMSKS). K286 contacts ATP.

This sequence belongs to the class-I aminoacyl-tRNA synthetase family. In terms of assembly, monomer. Zn(2+) is required as a cofactor.

It is found in the cytoplasm. It catalyses the reaction tRNA(Cys) + L-cysteine + ATP = L-cysteinyl-tRNA(Cys) + AMP + diphosphate. This chain is Cysteine--tRNA ligase, found in Pseudarthrobacter chlorophenolicus (strain ATCC 700700 / DSM 12829 / CIP 107037 / JCM 12360 / KCTC 9906 / NCIMB 13794 / A6) (Arthrobacter chlorophenolicus).